A 269-amino-acid polypeptide reads, in one-letter code: uncharacterized protein (269 aa).

Basic residues predominate over residues 1–12; it reads MSKRTNNKKRKH. Residues 1–82 form a disordered region; the sequence is MSKRTNNKKR…KKKENGNENV (82 aa). The span at 21–33 shows a compositional bias: acidic residues; the sequence is PENQDENQDEEFL. A compositionally biased stretch (basic and acidic residues) spans 34-63; sequence EDKNKDKNQNKNKDKNKNKDMNKNKNKDMN.

This is an uncharacterized protein from Dictyostelium discoideum (Social amoeba).